Here is a 322-residue protein sequence, read N- to C-terminus: ATP-dependent 6-phosphofructokinase (322 aa).

ATP is bound by residues glycine 12, 73-74, and 103-106; these read RF and GDGT. Aspartate 104 serves as a coordination point for Mg(2+). Residue 126 to 128 participates in substrate binding; the sequence is TID. Catalysis depends on aspartate 128, which acts as the Proton acceptor. Position 155 (arginine 155) interacts with ADP. Residues arginine 163 and 170–172 contribute to the substrate site; that span reads MGR. Residues 186–188, lysine 212, and 214–216 each bind ADP; these read GSE and KPS. Substrate is bound by residues glutamate 223, arginine 245, and 251–254; that span reads HTQR.

The protein belongs to the phosphofructokinase type A (PFKA) family. ATP-dependent PFK group I subfamily. Prokaryotic clade 'B1' sub-subfamily. Homotetramer. Mg(2+) serves as cofactor.

Its subcellular location is the cytoplasm. It catalyses the reaction beta-D-fructose 6-phosphate + ATP = beta-D-fructose 1,6-bisphosphate + ADP + H(+). Its pathway is carbohydrate degradation; glycolysis; D-glyceraldehyde 3-phosphate and glycerone phosphate from D-glucose: step 3/4. Allosterically activated by ADP and other diphosphonucleosides, and allosterically inhibited by phosphoenolpyruvate. In terms of biological role, catalyzes the phosphorylation of D-fructose 6-phosphate to fructose 1,6-bisphosphate by ATP, the first committing step of glycolysis. In Mesomycoplasma hyopneumoniae (strain J / ATCC 25934 / NCTC 10110) (Mycoplasma hyopneumoniae), this protein is ATP-dependent 6-phosphofructokinase.